Here is a 182-residue protein sequence, read N- to C-terminus: Translation initiation factor IF-3 (182 aa).

Residues 1-22 form a disordered region; sequence MPLGDCNISTPDNKQNRKNQEI.

This sequence belongs to the IF-3 family. Monomer.

The protein localises to the cytoplasm. Its function is as follows. IF-3 binds to the 30S ribosomal subunit and shifts the equilibrium between 70S ribosomes and their 50S and 30S subunits in favor of the free subunits, thus enhancing the availability of 30S subunits on which protein synthesis initiation begins. The chain is Translation initiation factor IF-3 from Xanthomonas axonopodis pv. citri (strain 306).